Here is a 597-residue protein sequence, read N- to C-terminus: Apurinic-apyrimidinic endonuclease 1 (597 aa).

The span at 232-246 (YNNDTKYLSNPKGVT) shows a compositional bias: polar residues. The disordered stretch occupies residues 232–296 (YNNDTKYLSN…IPPIPKNTED (65 aa)). Positions 265-274 (NNNNNNNNNK) are enriched in low complexity. Positions 380, 420, 456, 490, 493, 527, 540, 542, and 572 each coordinate Zn(2+). His-493 is a Mn(2+) binding site. Mn(2+) contacts are provided by Asp-540 and His-542.

The protein belongs to the AP endonuclease 2 family. It depends on Zn(2+) as a cofactor. Requires Mn(2+) as cofactor. Post-translationally, may be proteolytically cleaved into a 59 kDa form.

The protein resides in the mitochondrion. Apurinic/apyrimidinic (AP) endonuclease activity is enhanced with increasing concentrations of Mn(2+), while Zn(2+) initially enhances activity but subsequently inhibits activity in a concentration-dependent manner. Co(2+) inhibits apurinic/apyrimidinic (AP) endonuclease activity at concentrations greater than 2.5 mM. In terms of biological role, plays a role in mitochondrial DNA base excision repair (BER) pathway induced by oxidative stress. Has apurinic/apyrimidinic (AP) endonuclease activity towards double-stranded DNA (dsDNA) with a preference for C as opposite base. Has 3'-phosphatase activity; removes 3'-phosphate from blunt-end, recessed, and gapped DNA templates and thus, removes 3'-blocks for DNA polymerase activity during BER. Lacks 3'-5' exonuclease activity and does not cleave damaged bases by nucleotide incision repair (NIR). This is Apurinic-apyrimidinic endonuclease 1 from Plasmodium falciparum (isolate 3D7).